Here is a 73-residue protein sequence, read N- to C-terminus: Cell division protein ZapB (73 aa).

The stretch at 3–66 (LELLSKLETK…SWNEKVTGLV (64 aa)) forms a coiled coil.

It belongs to the ZapB family. Homodimer. The ends of the coiled-coil dimer bind to each other, forming polymers. Interacts with FtsZ.

It localises to the cytoplasm. In terms of biological role, non-essential, abundant cell division factor that is required for proper Z-ring formation. It is recruited early to the divisome by direct interaction with FtsZ, stimulating Z-ring assembly and thereby promoting cell division earlier in the cell cycle. Its recruitment to the Z-ring requires functional FtsA or ZipA. In Shewanella baltica (strain OS223), this protein is Cell division protein ZapB.